A 290-amino-acid polypeptide reads, in one-letter code: ATP synthase gamma chain (290 aa).

The protein belongs to the ATPase gamma chain family. In terms of assembly, F-type ATPases have 2 components, CF(1) - the catalytic core - and CF(0) - the membrane proton channel. CF(1) has five subunits: alpha(3), beta(3), gamma(1), delta(1), epsilon(1). CF(0) has three main subunits: a, b and c.

It localises to the cell inner membrane. Produces ATP from ADP in the presence of a proton gradient across the membrane. The gamma chain is believed to be important in regulating ATPase activity and the flow of protons through the CF(0) complex. This chain is ATP synthase gamma chain, found in Anaeromyxobacter dehalogenans (strain 2CP-1 / ATCC BAA-258).